Here is a 152-residue protein sequence, read N- to C-terminus: MVKAVTVLSGSGGVSGVIHFTQEEDGPTTVTGKLSGLAPGLHGFHVHALGDTTNGCLSTGPHYNPANKEHGAPEDETRHAGDLGNVTVGEDGTAEFTIVDKQIPLIGSGSIIGRAVVVHADPDDLGKGGHELSKSTGNAGGRLACGFIGLQG.

Cu cation contacts are provided by His-45, His-47, and His-62. Cys-56 and Cys-145 are joined by a disulfide. Zn(2+) contacts are provided by His-62, His-70, His-79, and Asp-82. Residue His-119 participates in Cu cation binding.

Belongs to the Cu-Zn superoxide dismutase family. As to quaternary structure, homodimer. The cofactor is Cu cation. Zn(2+) serves as cofactor.

The protein localises to the cytoplasm. It carries out the reaction 2 superoxide + 2 H(+) = H2O2 + O2. Destroys radicals which are normally produced within the cells and which are toxic to biological systems. This is Superoxide dismutase [Cu-Zn] (SODCC) from Panax ginseng (Korean ginseng).